The primary structure comprises 148 residues: Large ribosomal subunit protein bL9 (148 aa).

Belongs to the bacterial ribosomal protein bL9 family.

In terms of biological role, binds to the 23S rRNA. This Alkaliphilus oremlandii (strain OhILAs) (Clostridium oremlandii (strain OhILAs)) protein is Large ribosomal subunit protein bL9.